The sequence spans 228 residues: Ribulose-phosphate 3-epimerase (228 aa).

Residue Ser-11 coordinates substrate. 3 residues coordinate a divalent metal cation: His-36, Asp-38, and His-69. The active-site Proton acceptor is the Asp-38. Residues His-69, 145 to 148 (GFCG), 180 to 182 (DGG), and 202 to 203 (AS) each bind substrate. Asp-180 provides a ligand contact to a divalent metal cation. The active-site Proton donor is the Asp-180.

Belongs to the ribulose-phosphate 3-epimerase family. The cofactor is a divalent metal cation.

It catalyses the reaction D-ribulose 5-phosphate = D-xylulose 5-phosphate. It functions in the pathway carbohydrate degradation. In terms of biological role, catalyzes the reversible epimerization of D-ribulose 5-phosphate to D-xylulose 5-phosphate. The protein is Ribulose-phosphate 3-epimerase of Chlamydia muridarum (strain MoPn / Nigg).